A 304-amino-acid polypeptide reads, in one-letter code: Glutaminase (304 aa).

Substrate contacts are provided by Ser63, Asn113, Glu157, Asn164, Tyr188, Tyr240, and Val258.

The protein belongs to the glutaminase family. Homotetramer.

It catalyses the reaction L-glutamine + H2O = L-glutamate + NH4(+). The chain is Glutaminase from Paraburkholderia phytofirmans (strain DSM 17436 / LMG 22146 / PsJN) (Burkholderia phytofirmans).